The sequence spans 288 residues: ATP synthase gamma chain (288 aa).

The protein belongs to the ATPase gamma chain family. As to quaternary structure, F-type ATPases have 2 components, CF(1) - the catalytic core - and CF(0) - the membrane proton channel. CF(1) has five subunits: alpha(3), beta(3), gamma(1), delta(1), epsilon(1). CF(0) has three main subunits: a, b and c.

It localises to the cell inner membrane. Functionally, produces ATP from ADP in the presence of a proton gradient across the membrane. The gamma chain is believed to be important in regulating ATPase activity and the flow of protons through the CF(0) complex. The sequence is that of ATP synthase gamma chain from Acidithiobacillus ferrooxidans (strain ATCC 23270 / DSM 14882 / CIP 104768 / NCIMB 8455) (Ferrobacillus ferrooxidans (strain ATCC 23270)).